A 160-amino-acid polypeptide reads, in one-letter code: Putative oxygenase ATEG_00330 (160 aa).

One can recognise an EthD domain in the interval 24–100 (HYFGTALHAK…RNIAADPEFA (77 aa)).

Belongs to the tpcK family.

In terms of biological role, putative oxygenase; part of the gene cluster that mediates the biosynthesis of isoflavipucine. The PKS part of the PKS-NRPS ATEG_00325 probably assembles a triketide from an acetyl starter and two malonyl-CoA extender units. The poly-beta-keto intermediate would then be fused to the leucine unit by the NRPS part. The resulting amide would be liberated from the PKS-NRPS through reductive release of the linear PKS-NRPS product from the enzyme complex. Further steps in isoflapucine synthesis include a cyclization step, an oxidation step, a hydrolysis step involving a trans-amidation, and an additional oxidation step, leading to flavipucine. Formation of isoflavipucine from flavipucine requires an unusual rearrangement. Alternative rearrangement reactions could build up rubrobramide, representing a branching of flavipucine biosynthesis. The enzymes involved in the post-PKS-NRPS steps have not been identified yet, but the putative oxygenases ATEG_003329 and ATEG_00330 encoded by the cluster could play a role. The chain is Putative oxygenase ATEG_00330 from Aspergillus terreus (strain NIH 2624 / FGSC A1156).